Here is a 229-residue protein sequence, read N- to C-terminus: MLSGLIQRFEEEKMKHNQERVEELSLVRVDDTISQPPRYAPSAPMPSSMPTVALEILDKAMSNTTGATQTQKAEKAAFASYAEAFRDDVRLRQIKRHVNEQISPKLKSDLGGLKKKRAIIHMTLLIAAVVALLTSVCTLSSDMSVAFKLNGTSAEIPQWFKSLNPMLGVVNLGATFLMMVCAKSERSLNQQIDMIKKEVMKKQSYNDAVRMSFTEFSSVPLDGFELPLT.

2 consecutive transmembrane segments (helical) span residues 119–139 (IIHM…VCTL) and 162–182 (SLNP…MVCA).

It belongs to the orbivirus NS3 family. As to quaternary structure, forms homooligomers via coiled-coil motif. Interacts with host OPTN; this interaction inhibits innate immune response.

It is found in the host cell membrane. It localises to the host Golgi apparatus. Plays a role in the inhibition of host innate immune response. Interacts with host OPTN and thus inhibits the recruitment of TBK1 to the host Golgi apparatus. In turn, downstream partner IRF3 cannot be activated and IFN-beta production is impaired. In terms of biological role, facilitates viral particle release either by increasing plasma membrane permeability through a viroporin-like activity or by viral budding. The chain is Non-structural protein P8 (Segment-10) from Bluetongue virus 17 (isolate USA) (BTV 17).